The primary structure comprises 461 residues: Ornithine decarboxylase (461 aa).

Lysine 69 is subject to N6-(pyridoxal phosphate)lysine. Pyridoxal 5'-phosphate is bound by residues serine 200, glycine 237, and 274–277; that span reads EPGR. Serine 303 carries the post-translational modification Phosphoserine; by CK2. 331–332 serves as a coordination point for substrate; it reads YD. The Proton donor; shared with dimeric partner role is filled by cysteine 360. Cysteine 360 bears the S-nitrosocysteine mark. Aspartate 361 serves as a coordination point for substrate. Tyrosine 389 contributes to the pyridoxal 5'-phosphate binding site.

Belongs to the Orn/Lys/Arg decarboxylase class-II family. In terms of assembly, homodimer. Only the dimer is catalytically active, as the active sites are constructed of residues from both monomers. Pyridoxal 5'-phosphate serves as cofactor.

The catalysed reaction is L-ornithine + H(+) = putrescine + CO2. It participates in amine and polyamine biosynthesis; putrescine biosynthesis via L-ornithine pathway; putrescine from L-ornithine: step 1/1. With respect to regulation, inhibited by antizymes (AZs) OAZ1, OAZ2 and OAZ3 in response to polyamine levels. AZs inhibit the assembly of the functional homodimer by binding to ODC monomers. Additionally, OAZ1 targets ODC monomers for ubiquitin-independent proteolytic destruction by the 26S proteasome. Catalyzes the first and rate-limiting step of polyamine biosynthesis that converts ornithine into putrescine, which is the precursor for the polyamines, spermidine and spermine. Polyamines are essential for cell proliferation and are implicated in cellular processes, ranging from DNA replication to apoptosis. The chain is Ornithine decarboxylase (ODC1) from Bos taurus (Bovine).